The primary structure comprises 31 residues: Toxin BmKK12 (31 aa).

Residue Q1 is modified to Pyrrolidone carboxylic acid. 3 cysteine pairs are disulfide-bonded: C4–C20, C10–C25, and C14–C27. The residue at position 31 (P31) is a Proline amide.

The protein belongs to the short scorpion toxin superfamily. Potassium channel inhibitor family. Alpha-KTx 17 subfamily. Post-translationally, the N-terminus is blocked. In terms of tissue distribution, expressed by the venom gland.

It localises to the secreted. Blocker of potassium channels (Kv). This Olivierus martensii (Manchurian scorpion) protein is Toxin BmKK12.